The chain runs to 234 residues: Glucosamine-6-phosphate deaminase (234 aa).

The active-site Proton acceptor; for enolization step is the Asp63. Catalysis depends on Asn129, which acts as the For ring-opening step. His131 acts as the Proton acceptor; for ring-opening step in catalysis. The For ring-opening step role is filled by Glu136.

This sequence belongs to the glucosamine/galactosamine-6-phosphate isomerase family. NagB subfamily.

The catalysed reaction is alpha-D-glucosamine 6-phosphate + H2O = beta-D-fructose 6-phosphate + NH4(+). It functions in the pathway amino-sugar metabolism; N-acetylneuraminate degradation; D-fructose 6-phosphate from N-acetylneuraminate: step 5/5. Its function is as follows. Catalyzes the reversible isomerization-deamination of glucosamine 6-phosphate (GlcN6P) to form fructose 6-phosphate (Fru6P) and ammonium ion. This is Glucosamine-6-phosphate deaminase from Listeria monocytogenes serovar 1/2a (strain ATCC BAA-679 / EGD-e).